The following is an 88-amino-acid chain: DNA-directed RNA polymerase subunit omega (88 aa).

The protein belongs to the RNA polymerase subunit omega family. As to quaternary structure, the RNAP catalytic core consists of 2 alpha, 1 beta, 1 beta' and 1 omega subunit. When a sigma factor is associated with the core the holoenzyme is formed, which can initiate transcription.

The catalysed reaction is RNA(n) + a ribonucleoside 5'-triphosphate = RNA(n+1) + diphosphate. In terms of biological role, promotes RNA polymerase assembly. Latches the N- and C-terminal regions of the beta' subunit thereby facilitating its interaction with the beta and alpha subunits. This is DNA-directed RNA polymerase subunit omega from Yersinia pestis (strain Pestoides F).